The sequence spans 84 residues: U8-theraphotoxin-Hhn1f (84 aa).

The signal sequence occupies residues Met1–Cys21. Cystine bridges form between Cys23–Cys35, Cys29–Cys44, Cys34–Cys67, Cys54–Cys75, and Cys69–Cys81.

It belongs to the AVIT (prokineticin) family. Expressed by the venom gland.

Its subcellular location is the secreted. The protein is U8-theraphotoxin-Hhn1f of Cyriopagopus hainanus (Chinese bird spider).